A 534-amino-acid polypeptide reads, in one-letter code: CAP-Gly domain-containing linker protein 3 (534 aa).

Residues 1–16 show a composition bias toward basic and acidic residues; it reads MTREDLPDSTPEESKL. The segment at 1–33 is disordered; that stretch reads MTREDLPDSTPEESKLPMEFQSPLLEKRRRPVV. 3 ANK repeats span residues 107–148, 150–173, and 187–299; these read TDMT…LRSR, TNMNALHYAAYFDVPELLRTLLKA, and NHGT…KAGT. The CAP-Gly 1 domain occupies 304-346; it reads GTTEFASGQWVGVELDEPDGKNDGSVGGIRYFICPPKQGIFAP. Residues 349 to 391 are disordered; the sequence is KISKAPDQPPSSVTSTPRTPRVDFSRVTGKGRKEKKATHKKSL. Residues 358–367 are compositionally biased toward low complexity; sequence PSSVTSTPRT. The segment covering 377–390 has biased composition (basic residues); that stretch reads GKGRKEKKATHKKS. One can recognise a CAP-Gly 2 domain in the interval 423-465; that stretch reads GKTDFAPGYWFGIELEKPTGKHDGSVFGVRYFTCSAKNGVFAP. Residues 475-534 form a goLD region; the sequence is PKDPQTDNNDMKKVHQVTMTQPKRNFTKVRTPKEIASENSMSRILFCCWFPWLLRAEMKS.

In terms of assembly, homodimer.

The protein resides in the cytoplasm. It is found in the golgi apparatus. Its subcellular location is the golgi stack. In terms of biological role, functions as a cytoplasmic linker protein. Involved in TGN-endosome dynamics. The protein is CAP-Gly domain-containing linker protein 3 (clip3) of Xenopus laevis (African clawed frog).